The chain runs to 43 residues: Protein PsbN (43 aa).

The helical transmembrane segment at 4-24 (ATVLSITFAVILIAITGLAVY) threads the bilayer.

This sequence belongs to the PsbN family.

Its subcellular location is the cellular thylakoid membrane. Its function is as follows. May play a role in photosystem I and II biogenesis. The sequence is that of Protein PsbN from Synechocystis sp. (strain ATCC 27184 / PCC 6803 / Kazusa).